Here is a 140-residue protein sequence, read N- to C-terminus: Heavy metal-associated isoprenylated plant protein 31 (140 aa).

The 65-residue stretch at 3 to 67 folds into the HMA domain; it reads MTVEIRVPNL…AVRRAGKAAE (65 aa). Residues cysteine 14 and cysteine 17 each contribute to the a metal cation site. Position 137 is a cysteine methyl ester (cysteine 137). Cysteine 137 is lipidated: S-farnesyl cysteine. Residues 138-140 constitute a propeptide, removed in mature form; it reads TIM.

Belongs to the HIPP family.

Functionally, heavy-metal-binding protein. In Arabidopsis thaliana (Mouse-ear cress), this protein is Heavy metal-associated isoprenylated plant protein 31.